We begin with the raw amino-acid sequence, 628 residues long: 1,4-alpha-glucan branching enzyme GlgB (628 aa).

Asp-304 functions as the Nucleophile in the catalytic mechanism. Glu-355 serves as the catalytic Proton donor.

This sequence belongs to the glycosyl hydrolase 13 family. GlgB subfamily. Monomer.

The enzyme catalyses Transfers a segment of a (1-&gt;4)-alpha-D-glucan chain to a primary hydroxy group in a similar glucan chain.. Its pathway is glycan biosynthesis; glycogen biosynthesis. Functionally, catalyzes the formation of the alpha-1,6-glucosidic linkages in glycogen by scission of a 1,4-alpha-linked oligosaccharide from growing alpha-1,4-glucan chains and the subsequent attachment of the oligosaccharide to the alpha-1,6 position. The chain is 1,4-alpha-glucan branching enzyme GlgB from Streptococcus mutans serotype c (strain ATCC 700610 / UA159).